Consider the following 591-residue polypeptide: NADP-dependent malic enzyme (591 aa).

Over residues 1–10 the composition is skewed to basic and acidic residues; it reads MESTLKEMRD. Residues 1 to 26 are disordered; that stretch reads MESTLKEMRDGASVLDMDPKSTVGGG. Tyrosine 139 acts as the Proton donor in catalysis. Arginine 192 is an NAD(+) binding site. The active-site Proton acceptor is the lysine 210. A divalent metal cation-binding residues include glutamate 282, aspartate 283, and aspartate 306. Aspartate 306 serves as a coordination point for NAD(+). 335–351 is an NADP(+) binding site; it reads LFLGAGEAGTGIAELIA. Asparagine 447 is an NAD(+) binding site.

Belongs to the malic enzymes family. In terms of assembly, homotetramer. The cofactor is Mg(2+). It depends on Mn(2+) as a cofactor. In terms of tissue distribution, mRNA found twofold higher in leaves and stems than in roots.

The protein resides in the cytoplasm. The enzyme catalyses (S)-malate + NADP(+) = pyruvate + CO2 + NADPH. It carries out the reaction oxaloacetate + H(+) = pyruvate + CO2. The polypeptide is NADP-dependent malic enzyme (Populus trichocarpa (Western balsam poplar)).